We begin with the raw amino-acid sequence, 755 residues long: Sentrin-specific protease 5 (755 aa).

Residues 268–321 (VQKVTGDHQETRRENGEGGSCSPFPSPEPKDPSCRHQPYFPDMDSSAVVKGTNS) form a disordered region. The span at 272–283 (TGDHQETRRENG) shows a compositional bias: basic and acidic residues. Positions 567-724 (HMLDMDDLAT…VFVLQYCKCL (158 aa)) are protease. Catalysis depends on residues histidine 646, aspartate 663, and cysteine 713.

It belongs to the peptidase C48 family. In terms of assembly, interacts with CCAR2.

It is found in the nucleus. Its subcellular location is the nucleolus. Protease that catalyzes two essential functions in the SUMO pathway: processing of full-length SUMO3 to its mature form and deconjugation of SUMO2 and SUMO3 from targeted proteins. Has weak proteolytic activity against full-length SUMO1 or SUMO1 conjugates. Required for cell division. The chain is Sentrin-specific protease 5 (SENP5) from Homo sapiens (Human).